We begin with the raw amino-acid sequence, 116 residues long: Somatostatin (116 aa).

Positions Met-1–Gly-24 are cleaved as a signal peptide. The propeptide occupies Ala-25–Arg-88. Residue Ala-43 is modified to Alanine amide. Residues Gln-62–Met-82 are disordered. Cys-105 and Cys-116 are joined by a disulfide.

The protein belongs to the somatostatin family. C-terminal amidation of the neuronostatin peptide is required for its biological activity, including for the regulation of mean arterial pressure.

Its subcellular location is the secreted. Functionally, inhibits the secretion of pituitary hormones, including that of growth hormone/somatotropin (GH1), PRL, ACTH, luteinizing hormone (LH) and TSH. Also impairs ghrelin- and GnRH-stimulated secretion of GH1 and LH; the inhibition of ghrelin-stimulated secretion of GH1 can be further increased by neuronostatin. May enhance low-glucose-induced glucagon release by pancreatic alpha cells. This effect may be mediated by binding to GPR107 and PKA activation. May regulate cardiac contractile function. May compromise cardiomyocyte viability. In the central nervous system, may impair memory retention and may affect hippocampal excitability. May also have anxiolytic and anorexigenic effects. May play a role in arterial pressure regulation. May inhibit basal, but not ghrelin- or GnRH-stimulated secretion of GH1 or LH, but does not affect the release of other pituitary hormones, including PRL, ACTH, FSH or TSH. Potentiates inhibitory action of somatostatin on ghrelin-stimulated secretion of GH1, but not that on GnRH-stimulated secretion of LH. The sequence is that of Somatostatin (SST) from Homo sapiens (Human).